The following is a 244-amino-acid chain: Krueppel-like factor 9 (244 aa).

2 disordered regions span residues Val24–Gly51 and Pro79–His143. A compositionally biased stretch (basic and acidic residues) spans Asp32–Gly51. Ser122 carries the phosphoserine modification. Residues Lys134–His143 are compositionally biased toward basic residues. 3 C2H2-type zinc fingers span residues His143–His167, Phe173–His197, and Phe203–His225.

It belongs to the Sp1 C2H2-type zinc-finger protein family. Interacts with ZZEF1.

The protein localises to the nucleus. Functionally, transcription factor that binds to GC box promoter elements. Selectively activates mRNA synthesis from genes containing tandem repeats of GC boxes but represses genes with a single GC box. Acts as an epidermal circadian transcription factor regulating keratinocyte proliferation. The polypeptide is Krueppel-like factor 9 (Klf9) (Rattus norvegicus (Rat)).